The following is a 67-amino-acid chain: Large ribosomal subunit protein uL29 (67 aa).

The protein belongs to the universal ribosomal protein uL29 family.

The chain is Large ribosomal subunit protein uL29 from Exiguobacterium sp. (strain ATCC BAA-1283 / AT1b).